A 178-amino-acid polypeptide reads, in one-letter code: Disulfide bond formation protein B (178 aa).

At 1 to 14 (MLSFFKTLSTKRSA) the chain is on the cytoplasmic side. A helical membrane pass occupies residues 15–31 (WFLLFSSALLLEAIALY). The Periplasmic portion of the chain corresponds to 32–49 (FQHGMGLAPCVMCIYERV). Residues C41 and C44 are joined by a disulfide bond. A helical transmembrane segment spans residues 50 to 65 (AILGIAFSGLLGLLYP). The Cytoplasmic portion of the chain corresponds to 66–72 (SSMLLRL). A helical membrane pass occupies residues 73-90 (VALLIGLSSAIKGLMISI). The Periplasmic segment spans residues 91 to 145 (THLDLQLYPAPWKQCSAVAEFPETLPLDQWFPALFLPSGSCSEVTWQFLGFSMVQ). C105 and C131 form a disulfide bridge. A helical membrane pass occupies residues 146-164 (WIVVIFALYTLLLALIFIS). Over 165–177 (QVKRLKPKQRRLF) the chain is Cytoplasmic.

The protein belongs to the DsbB family.

Its subcellular location is the cell inner membrane. Functionally, required for disulfide bond formation in some periplasmic proteins. Acts by oxidizing the DsbA protein. This chain is Disulfide bond formation protein B, found in Pasteurella multocida (strain Pm70).